A 293-amino-acid chain; its full sequence is Protein translocase subunit SecF (293 aa).

Transmembrane regions (helical) follow at residues 10 to 30 (ARIFFSITAVVLIVGIVSMFA), 130 to 150 (VKSAVGAVVLSWVLMIIYITI), 158 to 178 (LAAIVALIIDVMVTLTWFSVL), 185 to 205 (SFVAALLTVVGYSVNGTIVVF), 244 to 264 (LFAVVAIFLFGGETIHNFSFA), and 267 to 287 (VGFCSGFYTSTFLAGSMWLFF).

It belongs to the SecD/SecF family. SecF subfamily. As to quaternary structure, forms a complex with SecD. Part of the essential Sec protein translocation apparatus which comprises SecA, SecYEG and auxiliary proteins SecDF. Other proteins may also be involved.

The protein resides in the cell membrane. Its function is as follows. Part of the Sec protein translocase complex. Interacts with the SecYEG preprotein conducting channel. SecDF uses the proton motive force (PMF) to complete protein translocation after the ATP-dependent function of SecA. The sequence is that of Protein translocase subunit SecF from Acidaminococcus fermentans (strain ATCC 25085 / DSM 20731 / CCUG 9996 / CIP 106432 / VR4).